Consider the following 60-residue polypeptide: Large ribosomal subunit protein uL30 (60 aa).

This sequence belongs to the universal ribosomal protein uL30 family. In terms of assembly, part of the 50S ribosomal subunit.

This Staphylococcus epidermidis (strain ATCC 35984 / DSM 28319 / BCRC 17069 / CCUG 31568 / BM 3577 / RP62A) protein is Large ribosomal subunit protein uL30.